The chain runs to 348 residues: Short-chain dehydrogenase fogG (348 aa).

Leu51, Arg75, Asp100, and Asn126 together coordinate NADP(+). Active-site proton donor residues include Ser180 and Tyr215. NADP(+) is bound by residues Tyr215 and Lys219. Lys219 acts as the Lowers pKa of active site Tyr in catalysis.

It belongs to the short-chain dehydrogenases/reductases (SDR) family.

It participates in secondary metabolite biosynthesis. Short-chain dehydrogenase; part of the gene cluster that mediates the biosynthesis of flavoglaucin and congeners (including aspergin, dihydroauroglaucin and auroglaucin), prenylated salicylaldehyde derivatives carrying a saturated or an unsaturated C-7 side chain. The PKS fogA releases the carboxylic acid (8E,10E,12E)-3,5,7-trihydroxytetradeca-8,10,12-trienoic acid as its product, as well as derivatives with one and two double bonds. FogA is indeed able to reduce the initial triketide, thus being at least partially responsible for the differently saturated heptyl side chains of flavoglaucin congeners. The oxidoreductases fogB, fogC and fogD modify the nascent polyketide in fogA-bound form and, together, fogA, fogB, fogC and fogD are necessary for the formation of the aromatic core and the cyclized PKS products are released as salicyl alcohols. In particular, fogB is responsible for oxidation of a hydroxyl group or reduction of remaining double bond(s) at the C-7 residue whereas fogD is probably involved in the reductive release of the modified PKS products. The cytochrome P450 monooxygenase fogE is then responsible for the hydroxylation at C-3 of the benzene ring. The fogE products are substrates of the prenyltransferase fogH and the prenylated benzyl alcohols are subsequently oxidized by the fogF to produce the final aryl aldehydes flavoglaucin and congeners. The short-chain dehydrogenase fogG does not seem to be involved in the biosynthesis of the prenylated salicylaldehyde derivatives. This chain is Short-chain dehydrogenase fogG, found in Aspergillus ruber (strain CBS 135680).